The primary structure comprises 960 residues: MTQTLTQLENSDAFIARHIGPTPEEQQQMLAQIGAADLDTLLARIVPADIQLPAAPPIGAACSEQQALDELRAIAAQNQCYRSFIGMGYYGVQTPPAIQRNMLENPGWYTAYTPYQPEVSQGRLEALLNFQQMTLDLTGLDLASASLLDEATAAAEAMGLARRASRLKQANTFFIAQDVHPQTIDVVCTRAQSCGVEVIIDDARRAADHRDLFGVLLQQVGTQGDLHDYRALMDSLRERGVITCMAADPLALVLLEAPGRQGADVVFGSAQRFGVPMGYGGPHAAFFACREAFKRAMPGRIIGVARDAAGEPALRMAMQTREQHIRREKANSNICTSQVLLANIAGMYAVYHGPQGLRRIAERVHRLADILALGLQQKGVTLRNHCWFDTLTVAVPDKGAVLARALGFGINLRGDLDGAVGISFDECSTRDDLEALFTILLGDGHALDIDTLDTLVQEACEGSIPAALLRREPILTHPVFNRYHSETALMRYMHALERRDLALNQAMIPLGSCTMKLNAAAEMIPITWPEFAALHPFCPPEQAQGYRLLLSQLAEWLVQLTGYDAVCLQPNSGAQGEYAGLLAIRRYHESRGEGQRTRCLIPASAHGTNPASAQMAGMEVEVVACDEQGNIDLHDLRERARQAGERLAAIMVTYPSTHGVYEETIREVCQIVHQYGGQVYLDGANMNAQVGITTPGYIGADVSHLNLHKTFAIPHGGGGPGMGPIGVKAHLAPFVPGHRVVQLAGLTTRQGAVSAAPFGSASILPISWMYIRMMGAEGLRRASTVAILNANYIARRLGAVYPVLYRGKEGYVAHECILDLRPLKARSGISEMDIAKRLIDYGFHAPTMSFPVAGTLMVEPTESENKAELDRFIAAMLAIHDEITRVETGEWPLQDNPLVNAPHTQRELVGEWHHPYGRELAVFPTPQTRENKYWPAVKRLDDVYGDRHLQCSCPPLSDWA.

Position 709 is an N6-(pyridoxal phosphate)lysine (Lys-709).

Belongs to the GcvP family. The glycine cleavage system is composed of four proteins: P, T, L and H. Pyridoxal 5'-phosphate is required as a cofactor.

The catalysed reaction is N(6)-[(R)-lipoyl]-L-lysyl-[glycine-cleavage complex H protein] + glycine + H(+) = N(6)-[(R)-S(8)-aminomethyldihydrolipoyl]-L-lysyl-[glycine-cleavage complex H protein] + CO2. Functionally, the glycine cleavage system catalyzes the degradation of glycine. The P protein binds the alpha-amino group of glycine through its pyridoxal phosphate cofactor; CO(2) is released and the remaining methylamine moiety is then transferred to the lipoamide cofactor of the H protein. This Edwardsiella ictaluri (strain 93-146) protein is Glycine dehydrogenase (decarboxylating).